The primary structure comprises 232 residues: Phosphatidylserine decarboxylase proenzyme (232 aa).

The active-site Schiff-base intermediate with substrate; via pyruvic acid is the Ser-190. Ser-190 bears the Pyruvic acid (Ser); by autocatalysis mark.

It belongs to the phosphatidylserine decarboxylase family. PSD-A subfamily. As to quaternary structure, heterodimer of a large membrane-associated beta subunit and a small pyruvoyl-containing alpha subunit. It depends on pyruvate as a cofactor. Post-translationally, is synthesized initially as an inactive proenzyme. Formation of the active enzyme involves a self-maturation process in which the active site pyruvoyl group is generated from an internal serine residue via an autocatalytic post-translational modification. Two non-identical subunits are generated from the proenzyme in this reaction, and the pyruvate is formed at the N-terminus of the alpha chain, which is derived from the carboxyl end of the proenzyme. The post-translation cleavage follows an unusual pathway, termed non-hydrolytic serinolysis, in which the side chain hydroxyl group of the serine supplies its oxygen atom to form the C-terminus of the beta chain, while the remainder of the serine residue undergoes an oxidative deamination to produce ammonia and the pyruvoyl prosthetic group on the alpha chain.

The protein resides in the cell membrane. The enzyme catalyses a 1,2-diacyl-sn-glycero-3-phospho-L-serine + H(+) = a 1,2-diacyl-sn-glycero-3-phosphoethanolamine + CO2. It functions in the pathway phospholipid metabolism; phosphatidylethanolamine biosynthesis; phosphatidylethanolamine from CDP-diacylglycerol: step 2/2. Catalyzes the formation of phosphatidylethanolamine (PtdEtn) from phosphatidylserine (PtdSer). Important for establishment of root nodule symbiosis with the host plant. This chain is Phosphatidylserine decarboxylase proenzyme, found in Rhizobium meliloti (strain 1021) (Ensifer meliloti).